Here is a 273-residue protein sequence, read N- to C-terminus: Phosphatidylglycerol--prolipoprotein diacylglyceryl transferase (273 aa).

7 helical membrane passes run 19–39, 55–75, 90–110, 125–145, 174–194, 202–222, and 230–250; these read VHWY…LASY, LVFY…VLFY, VWTG…AMIL, FIAP…FIGA, PSQI…LWWF, MAVS…VEFF, and GFIL…MLLI. Arg-138 lines the a 1,2-diacyl-sn-glycero-3-phospho-(1'-sn-glycerol) pocket.

Belongs to the Lgt family.

The protein localises to the cell inner membrane. The enzyme catalyses L-cysteinyl-[prolipoprotein] + a 1,2-diacyl-sn-glycero-3-phospho-(1'-sn-glycerol) = an S-1,2-diacyl-sn-glyceryl-L-cysteinyl-[prolipoprotein] + sn-glycerol 1-phosphate + H(+). It participates in protein modification; lipoprotein biosynthesis (diacylglyceryl transfer). Its function is as follows. Catalyzes the transfer of the diacylglyceryl group from phosphatidylglycerol to the sulfhydryl group of the N-terminal cysteine of a prolipoprotein, the first step in the formation of mature lipoproteins. In Acinetobacter baylyi (strain ATCC 33305 / BD413 / ADP1), this protein is Phosphatidylglycerol--prolipoprotein diacylglyceryl transferase.